The chain runs to 1383 residues: Putative autophagy-related protein 11 (1383 aa).

2 coiled-coil regions span residues 16-49 and 117-324; these read DKNN…YELN and NLFL…QNKE. Basic and acidic residues-rich tracts occupy residues 1151-1224 and 1233-1249; these read EEEK…EDRK and HSSD…KTKE. Residues 1151–1249 form a disordered region; it reads EEEKKKNEEE…KYNKKEKTKE (99 aa).

The protein belongs to the ATG11 family.

In terms of biological role, involved in cytoplasm to vacuole transport (Cvt), pexophagy, mitophagy and nucleophagy. Works as scaffold proteins that recruit ATG proteins to the pre-autophagosome (PAS), the site of vesicle/autophagosome formation. The sequence is that of Putative autophagy-related protein 11 from Plasmodium falciparum (isolate 3D7).